We begin with the raw amino-acid sequence, 103 residues long: Large ribosomal subunit protein uL24 (103 aa).

This sequence belongs to the universal ribosomal protein uL24 family. As to quaternary structure, part of the 50S ribosomal subunit.

One of two assembly initiator proteins, it binds directly to the 5'-end of the 23S rRNA, where it nucleates assembly of the 50S subunit. Its function is as follows. One of the proteins that surrounds the polypeptide exit tunnel on the outside of the subunit. This chain is Large ribosomal subunit protein uL24, found in Agathobacter rectalis (strain ATCC 33656 / DSM 3377 / JCM 17463 / KCTC 5835 / VPI 0990) (Eubacterium rectale).